The following is a 622-amino-acid chain: Iron transport multicopper oxidase fio1 (622 aa).

A signal peptide spans 1–22 (MNKFFSFPILGLLLTCVRFVVA). Residues 23–553 (KERLFEWNVT…GEMPAGWTSK (531 aa)) lie on the Extracellular side of the membrane. 2 N-linked (GlcNAc...) asparagine glycosylation sites follow: N30 and N79. Plastocyanin-like domains lie at 49-147 (IGVN…FIIN) and 194-304 (TGLF…LSYN). Cu cation-binding residues include H85 and H87. N-linked (GlcNAc...) asparagine glycosylation is found at N117 and N123. Residues H129 and H131 each coordinate Cu cation. 8 N-linked (GlcNAc...) asparagine glycosylation sites follow: N198, N202, N234, N269, N296, N338, N360, and N376. In terms of domain architecture, Plastocyanin-like 3 spans 386–498 (EPVTYGPYTN…SGLLATFIEA (113 aa)). Cu cation is bound by residues H417, H420, H422, H480, C481, H482, and H486. N532 is a glycosylation site (N-linked (GlcNAc...) asparagine). The helical transmembrane segment at 554–574 (AIGTMAACVISACIGMGSIIF) threads the bilayer. Topologically, residues 575–622 (YGASIHPVPTEELDENDDLQEAALENAAMFLDTDKAVEKVVEGKDEIK) are cytoplasmic.

Belongs to the multicopper oxidase family. Requires Cu cation as cofactor.

It is found in the cell membrane. Functionally, could be an iron transport multicopper oxidase, which is required for Fe(2+) high affinity uptake. May be required to oxidize Fe(2+) and release it from the transporter. Essential component of copper-dependent iron transport. The protein is Iron transport multicopper oxidase fio1 (fio1) of Schizosaccharomyces pombe (strain 972 / ATCC 24843) (Fission yeast).